A 495-amino-acid chain; its full sequence is Dihydrolipoyl dehydrogenase, mitochondrial (495 aa).

Residues 59 to 68 (EKNATLGGTC), Lys77, and 169 to 171 (SGS) each bind FAD. Cys68 and Cys73 are oxidised to a cystine. Residues 206–213 (GAGVIGLE), Glu229, Val264, and Gly299 each bind NAD(+). Residues Asp340 and 346 to 349 (MLAH) each bind FAD. The active-site Proton acceptor is His472.

The protein belongs to the class-I pyridine nucleotide-disulfide oxidoreductase family. FAD serves as cofactor.

Its subcellular location is the mitochondrion matrix. It catalyses the reaction N(6)-[(R)-dihydrolipoyl]-L-lysyl-[protein] + NAD(+) = N(6)-[(R)-lipoyl]-L-lysyl-[protein] + NADH + H(+). This chain is Dihydrolipoyl dehydrogenase, mitochondrial (dld-1), found in Caenorhabditis elegans.